The chain runs to 140 residues: Nucleoside diphosphate kinase (140 aa).

ATP contacts are provided by Lys-11, Phe-59, Arg-87, Thr-93, Arg-104, and Asn-114. The active-site Pros-phosphohistidine intermediate is the His-117.

This sequence belongs to the NDK family. As to quaternary structure, homotetramer. It depends on Mg(2+) as a cofactor.

The protein resides in the cytoplasm. It carries out the reaction a 2'-deoxyribonucleoside 5'-diphosphate + ATP = a 2'-deoxyribonucleoside 5'-triphosphate + ADP. The enzyme catalyses a ribonucleoside 5'-diphosphate + ATP = a ribonucleoside 5'-triphosphate + ADP. Major role in the synthesis of nucleoside triphosphates other than ATP. The ATP gamma phosphate is transferred to the NDP beta phosphate via a ping-pong mechanism, using a phosphorylated active-site intermediate. This is Nucleoside diphosphate kinase from Azorhizobium caulinodans (strain ATCC 43989 / DSM 5975 / JCM 20966 / LMG 6465 / NBRC 14845 / NCIMB 13405 / ORS 571).